A 241-amino-acid polypeptide reads, in one-letter code: Small ribosomal subunit protein uS3 (241 aa).

A KH type-2 domain is found at 39–109 (IRQHVEKNLS…QIRINVIEVS (71 aa)). The tract at residues 215–241 (EQAMAAPAPTPRKKRRPQQFEDRSNEE) is disordered. Residues 232-241 (QQFEDRSNEE) show a composition bias toward basic and acidic residues.

This sequence belongs to the universal ribosomal protein uS3 family. In terms of assembly, part of the 30S ribosomal subunit. Forms a tight complex with proteins S10 and S14.

Its function is as follows. Binds the lower part of the 30S subunit head. Binds mRNA in the 70S ribosome, positioning it for translation. This is Small ribosomal subunit protein uS3 from Crocosphaera subtropica (strain ATCC 51142 / BH68) (Cyanothece sp. (strain ATCC 51142)).